The following is a 325-amino-acid chain: tRNA (guanine-N(7)-)-methyltransferase (325 aa).

The tract at residues 1–101 (MSEATDKQKQ…LEYPKSPESM (101 aa)) is disordered. Positions 51 to 69 (VSTTPEPEQSDSSATTATI) are enriched in polar residues. Residues Gly122, 145-146 (EI), 199-200 (NA), and Cys219 each bind S-adenosyl-L-methionine. Asp222 is an active-site residue. 297 to 299 (TEE) serves as a coordination point for S-adenosyl-L-methionine.

The protein belongs to the class I-like SAM-binding methyltransferase superfamily. TrmB family. In terms of assembly, forms a complex with TRM82.

It is found in the nucleus. The enzyme catalyses guanosine(46) in tRNA + S-adenosyl-L-methionine = N(7)-methylguanosine(46) in tRNA + S-adenosyl-L-homocysteine. The protein operates within tRNA modification; N(7)-methylguanine-tRNA biosynthesis. Catalyzes the formation of N(7)-methylguanine at position 46 (m7G46) in tRNA. The chain is tRNA (guanine-N(7)-)-methyltransferase from Candida albicans (strain SC5314 / ATCC MYA-2876) (Yeast).